The primary structure comprises 528 residues: Phosphoenolpyruvate carboxykinase (ATP) (528 aa).

Positions 56, 192, and 198 each coordinate substrate. ATP contacts are provided by residues Lys-198, His-217, and 233–241 (GLSGTGKTT). Positions 198 and 217 each coordinate Mn(2+). Residue Asp-254 coordinates Mn(2+). ATP is bound by residues Glu-282, Arg-319, and Thr-444. A substrate-binding site is contributed by Arg-319.

Belongs to the phosphoenolpyruvate carboxykinase (ATP) family. The cofactor is Mn(2+).

It is found in the cytoplasm. The catalysed reaction is oxaloacetate + ATP = phosphoenolpyruvate + ADP + CO2. It functions in the pathway carbohydrate biosynthesis; gluconeogenesis. Functionally, involved in the gluconeogenesis. Catalyzes the conversion of oxaloacetate (OAA) to phosphoenolpyruvate (PEP) through direct phosphoryl transfer between the nucleoside triphosphate and OAA. The protein is Phosphoenolpyruvate carboxykinase (ATP) of Bacillus cereus (strain B4264).